The chain runs to 130 residues: Small ribosomal subunit protein uS11 (130 aa).

The protein belongs to the universal ribosomal protein uS11 family. As to quaternary structure, part of the 30S ribosomal subunit. Interacts with proteins S7 and S18. Binds to IF-3.

In terms of biological role, located on the platform of the 30S subunit, it bridges several disparate RNA helices of the 16S rRNA. Forms part of the Shine-Dalgarno cleft in the 70S ribosome. In Acholeplasma laidlawii (strain PG-8A), this protein is Small ribosomal subunit protein uS11.